The chain runs to 137 residues: Large ribosomal subunit protein uL16 (137 aa).

Positions 1-20 are disordered; sequence MLQPKRTKFRKQQKMRNRGL.

Belongs to the universal ribosomal protein uL16 family. As to quaternary structure, part of the 50S ribosomal subunit.

Functionally, binds 23S rRNA and is also seen to make contacts with the A and possibly P site tRNAs. This chain is Large ribosomal subunit protein uL16, found in Francisella philomiragia subsp. philomiragia (strain ATCC 25017 / CCUG 19701 / FSC 153 / O#319-036).